The sequence spans 128 residues: Large ribosomal subunit protein mL51 (128 aa).

The transit peptide at 1-31 directs the protein to the mitochondrion; that stretch reads MAGSVPWAASRRLWGWVPSACRSFSLGVPRL.

It belongs to the mitochondrion-specific ribosomal protein mL51 family. As to quaternary structure, component of the mitochondrial ribosome large subunit (39S) which comprises a 16S rRNA and about 50 distinct proteins. Interacts with OXA1L.

Its subcellular location is the mitochondrion. This chain is Large ribosomal subunit protein mL51 (Mrpl51), found in Mus musculus (Mouse).